A 69-amino-acid chain; its full sequence is MLSSRTSSIILILAILVAIMAVAQCRNIQYDVEEMTPEAAFRYAQWGEIPHKRVPSAGDMMVRFGKRSI.

Residues 1–25 form the signal peptide; the sequence is MLSSRTSSIILILAILVAIMAVAQC. The propeptide occupies 26-51; the sequence is RNIQYDVEEMTPEAAFRYAQWGEIPH. The residue at position 64 (Phe64) is a Phenylalanine amide. A propeptide spanning residues 68 to 69 is cleaved from the precursor; it reads SI.

The protein belongs to the FARP (FMRFamide related peptide) family.

Its subcellular location is the secreted. In terms of biological role, probable FMRFamide-like neuropeptides. Plays a role in behaviors associated with a sleep-like state induced by stress (SIS), acting in concert with the FMRFamide related peptide flp-13 and neuropeptide-like protein nlp-8. This is FMRFamide-like neuropeptides 24 from Caenorhabditis elegans.